The chain runs to 422 residues: Zinc finger protein Gfi-1 (422 aa).

The segment at 1-20 is SNAG domain; the sequence is MPRSFLVKSKKAHSYHQPRS. The disordered stretch occupies residues 1–109; the sequence is MPRSFLVKSK…ASEKSMCPSL (109 aa). Phosphoserine is present on residues S20 and S56. Residues 140-257 form a required for interaction with RELA region; that stretch reads RPCGALERGA…LLLGGGSYKC (118 aa). 6 consecutive C2H2-type zinc fingers follow at residues 255 to 278, 284 to 306, 312 to 334, 340 to 362, 368 to 390, and 396 to 419; these read YKCI…RRSH, FACE…KAVH, FDCK…LLIH, YPCQ…TFIH, HKCQ…SRKH, and FGCD…ETQH.

As to quaternary structure, interacts with U2AF1L4. Component of RCOR-GFI-KDM1A-HDAC complexes. Interacts directly with RCOR1, KDM1A and HDAC2. Also interacts with HDAC1. Interacts (via the zinc-finger domain) with ARIH2; the interaction prevents GFI1 ubiquitination and proteasomal degradation. Interacts with PIAS3; the interaction relieves the inhibitory effect of PIAS3 on STAT3-mediated transcriptional activity. Forms a complex with EHMT2 and HDAC1 to promote 'Lys-9' dimethylation of H3 (H3K9Me2) and repress expression of target genes. Interacts directly with EHMT2. Component of the GFI1-AJUBA-HDAC1 repressor complex. Interacts directly with AJUBA (via ITS LIM domains); the interaction results in the HDAC-dependent corepression of a subset of GFI1 target genes and, occurs independently of the SNAG domain. Interacts with SPI1; the interaction inhibits SPI1 transcriptional activity targeted at macrophage-specific genes, repressing macrophage differentiation of myeloid progenitor cells and promoting granulocyte commitment. Interacts with RUNX1T1; the interaction represses HDAC-mediated transcriptional activity. Interacts with RELA; the interaction occurs on liposaccharide (LPS) stimulation and controls RELA DNA binding activity and regulates endotoxin-mediated TOLL-like receptor inflammatory response. Interacts (via the C-terminal zinc fingers) with ZBTB17; the interaction results in the recruitment of GFI1 to the CDKN1A/p21 and CDKN1B promoters and repression of transcription. Ubiquitinated. Ubiquitination and degradation by the proteasome is inhibited by the ubiquitin ligase, ARIH2.

The protein resides in the nucleus. Its function is as follows. Transcription repressor essential for hematopoiesis. Functions in a cell-context and development-specific manner. Binds to 5'-TAAATCAC[AT]GCA-3' in the promoter region of a large number of genes. Component of several complexes, including the EHMT2-GFI1-HDAC1, AJUBA-GFI1-HDAC1 and RCOR-GFI-KDM1A-HDAC complexes, that suppress, via histone deacetylase (HDAC) recruitment, a number of genes implicated in multilineage blood cell development. Regulates neutrophil differentiation, promotes proliferation of lymphoid cells, and is required for granulocyte development. Inhibits SPI1 transcriptional activity at macrophage-specific genes, repressing macrophage differentiation of myeloid progenitor cells and promoting granulocyte commitment. Mediates, together with U2AF1L4, the alternative splicing of CD45 and controls T-cell receptor signaling. Regulates the endotoxin-mediated Toll-like receptor (TLR) inflammatory response by antagonizing RELA. Cooperates with CBFA2T2 to regulate ITGB1-dependent neurite growth. Controls cell-cycle progression by repressing CDKNIA/p21 transcription in response to TGFB1 via recruitment of GFI1 by ZBTB17 to the CDKNIA/p21 and CDKNIB promoters. Required for the maintenance of inner ear hair cells. In addition to its role in transcription, acts as a substrate adapter for PRMT1 in the DNA damage response: facilitates the recognition of TP53BP1 and MRE11 substrates by PRMT1, promoting their methylation and the DNA damage response. The protein is Zinc finger protein Gfi-1 (GFI1) of Homo sapiens (Human).